A 143-amino-acid polypeptide reads, in one-letter code: NADH-quinone oxidoreductase subunit A (143 aa).

The next 3 membrane-spanning stretches (helical) occupy residues 12-32 (YIVG…FLGG), 61-81 (FYLI…LYIW), and 90-110 (WIGF…LIYA).

The protein belongs to the complex I subunit 3 family. In terms of assembly, NDH-1 is composed of 13 different subunits. Subunits NuoA, H, J, K, L, M, N constitute the membrane sector of the complex.

Its subcellular location is the cell inner membrane. The enzyme catalyses a quinone + NADH + 5 H(+)(in) = a quinol + NAD(+) + 4 H(+)(out). In terms of biological role, NDH-1 shuttles electrons from NADH, via FMN and iron-sulfur (Fe-S) centers, to quinones in the respiratory chain. The immediate electron acceptor for the enzyme in this species is believed to be ubiquinone. Couples the redox reaction to proton translocation (for every two electrons transferred, four hydrogen ions are translocated across the cytoplasmic membrane), and thus conserves the redox energy in a proton gradient. This is NADH-quinone oxidoreductase subunit A from Blochmanniella floridana.